We begin with the raw amino-acid sequence, 314 residues long: DNA-directed RNA polymerase subunit alpha (314 aa).

An alpha N-terminal domain (alpha-NTD) region spans residues 1-227; sequence MTTFEIECIE…ELLFPLKEIN (227 aa). Residues 237–314 form an alpha C-terminal domain (alpha-CTD) region; the sequence is IEDSKINQIL…LPKEKTSKSN (78 aa).

This sequence belongs to the RNA polymerase alpha chain family. In plastids the minimal PEP RNA polymerase catalytic core is composed of four subunits: alpha, beta, beta', and beta''. When a (nuclear-encoded) sigma factor is associated with the core the holoenzyme is formed, which can initiate transcription.

Its subcellular location is the plastid. The protein resides in the chloroplast. It carries out the reaction RNA(n) + a ribonucleoside 5'-triphosphate = RNA(n+1) + diphosphate. DNA-dependent RNA polymerase catalyzes the transcription of DNA into RNA using the four ribonucleoside triphosphates as substrates. This chain is DNA-directed RNA polymerase subunit alpha, found in Pyrenomonas salina.